A 653-amino-acid polypeptide reads, in one-letter code: tRNA-guanine(15) transglycosylase (653 aa).

The active-site Nucleophile is the aspartate 91. 2 residues coordinate substrate: aspartate 126 and alanine 193. Zn(2+)-binding residues include cysteine 276, cysteine 278, and cysteine 281. Positions 578 to 653 (AWRVAVNEES…QAVKTRKGGF (76 aa)) constitute a PUA domain.

It belongs to the archaeosine tRNA-ribosyltransferase family. Requires Zn(2+) as cofactor.

The enzyme catalyses guanosine(15) in tRNA + 7-cyano-7-deazaguanine = 7-cyano-7-carbaguanosine(15) in tRNA + guanine. It functions in the pathway tRNA modification; archaeosine-tRNA biosynthesis. In terms of biological role, exchanges the guanine residue with 7-cyano-7-deazaguanine (preQ0) at position 15 in the dihydrouridine loop (D-loop) of archaeal tRNAs. This is tRNA-guanine(15) transglycosylase from Methanothermobacter thermautotrophicus (strain ATCC 29096 / DSM 1053 / JCM 10044 / NBRC 100330 / Delta H) (Methanobacterium thermoautotrophicum).